Here is a 491-residue protein sequence, read N- to C-terminus: Galactose-1-phosphate uridylyltransferase 1 (491 aa).

It belongs to the galactose-1-phosphate uridylyltransferase type 2 family.

It localises to the cytoplasm. It carries out the reaction alpha-D-galactose 1-phosphate + UDP-alpha-D-glucose = alpha-D-glucose 1-phosphate + UDP-alpha-D-galactose. It participates in carbohydrate metabolism; galactose metabolism. In Streptococcus pneumoniae serotype 4 (strain ATCC BAA-334 / TIGR4), this protein is Galactose-1-phosphate uridylyltransferase 1 (galT1).